The chain runs to 162 residues: Phosphopantetheine adenylyltransferase (162 aa).

Serine 9 contributes to the substrate binding site. Residues 9–10 (SF) and histidine 17 each bind ATP. Residues lysine 41, leucine 77, and lysine 91 each coordinate substrate. Residues 92–94 (GLR), glutamate 102, and 126–132 (YAFLSSS) each bind ATP.

Belongs to the bacterial CoaD family. As to quaternary structure, homohexamer. Requires Mg(2+) as cofactor.

It localises to the cytoplasm. The catalysed reaction is (R)-4'-phosphopantetheine + ATP + H(+) = 3'-dephospho-CoA + diphosphate. It participates in cofactor biosynthesis; coenzyme A biosynthesis; CoA from (R)-pantothenate: step 4/5. Functionally, reversibly transfers an adenylyl group from ATP to 4'-phosphopantetheine, yielding dephospho-CoA (dPCoA) and pyrophosphate. The chain is Phosphopantetheine adenylyltransferase from Parafrankia sp. (strain EAN1pec).